The sequence spans 329 residues: MKQPVFAVTSGEPAGIGPDICLDLAFARLPCRCAVLGDKHLLRARAEALGKSVVLRDFDPESGGAAYGELEVLHIPAVEAVEAGKLNPANAAYVLQLLDTALAGISDGIFDGIVTAPLHKGIINDARASTGFFSGHTEYLAEKSGTGQVVMMLAGKDLRVALVTTHLPLKDVAAAITQPLIESVARILHHDLKHKFGIKNPKILVAGLNPHAGEGGHLGHEETDTIIPALENLRREGINLAGPYPADTLFQPFMLEGADAVLAMYHDQGLPVLKYHSFGQGVNITLGLPFIRTSVDHGTALDLAATGRADSGSLITAVETAVEMARGSL.

Residues His136 and Thr137 each coordinate substrate. A divalent metal cation-binding residues include His166, His211, and His266. 3 residues coordinate substrate: Lys274, Asn283, and Arg292.

The protein belongs to the PdxA family. In terms of assembly, homodimer. The cofactor is Zn(2+). Mg(2+) serves as cofactor. Co(2+) is required as a cofactor.

Its subcellular location is the cytoplasm. The enzyme catalyses 4-(phosphooxy)-L-threonine + NAD(+) = 3-amino-2-oxopropyl phosphate + CO2 + NADH. It functions in the pathway cofactor biosynthesis; pyridoxine 5'-phosphate biosynthesis; pyridoxine 5'-phosphate from D-erythrose 4-phosphate: step 4/5. Functionally, catalyzes the NAD(P)-dependent oxidation of 4-(phosphooxy)-L-threonine (HTP) into 2-amino-3-oxo-4-(phosphooxy)butyric acid which spontaneously decarboxylates to form 3-amino-2-oxopropyl phosphate (AHAP). The chain is 4-hydroxythreonine-4-phosphate dehydrogenase from Neisseria meningitidis serogroup A / serotype 4A (strain DSM 15465 / Z2491).